Reading from the N-terminus, the 114-residue chain is Superoxide dismutase [Cu-Zn] (114 aa).

3 residues coordinate Cu cation: His-37, His-39, and His-54. Zn(2+) contacts are provided by His-54, His-62, His-71, and Asp-74. The tract at residues His-54 to Ala-80 is disordered. Residues Asn-59–Gly-73 are compositionally biased toward basic and acidic residues. His-111 is a Cu cation binding site.

This sequence belongs to the Cu-Zn superoxide dismutase family. In terms of assembly, homodimer. Cu cation serves as cofactor. Zn(2+) is required as a cofactor.

Its subcellular location is the cytoplasm. It catalyses the reaction 2 superoxide + 2 H(+) = H2O2 + O2. Its function is as follows. Destroys radicals which are normally produced within the cells and which are toxic to biological systems. The protein is Superoxide dismutase [Cu-Zn] of Drosophila tolteca (Fruit fly).